The chain runs to 510 residues: O-acetyltransferase pyr7 (510 aa).

This sequence belongs to the fumigaclavine B O-acetyltransferase family.

Its pathway is secondary metabolite biosynthesis; terpenoid biosynthesis. Functionally, O-acetyltransferase; part of the gene cluster that mediates the biosynthesis of pyripyropene A, a specific human acyl-coenzyme A:cholesterol acyltransferase 2 inhibitor. The first step of the pathway is the synthesis of nicotinyl-CoA from nicotinic acid by the nicotinic acid-CoA ligase pyr1. Nicotinyl-CoA is then a substrate of polyketide synthase pyr2 to produce 4-hydroxy-6-(3-pyridinyl)-2H-pyran-2-one (HPPO) which is further prenylated by the polyprenyl transferase pyr6 to yield farnesyl-HPPO. The next steps consist of an epoxidation of farnesyl-HPPO to epoxyfarnesyl-HPPO by FAD-dependent monooxygenase pyr5 and a cyclization of the terpenoid portion by the terpene cyclase pyr4 to yield deacetyl-pyripyropene E. The 2 cytochrome P450 monooxygenases pyr3 and pyr9, and the 2 acetyltransferases pyr7 and pyr8 are involved in the conversion of deacetyl-pyripyropene E into pyripyropene A through several cycles of oxidation and acetylation steps. Pyr7 acetylates deacetyl-pyripyropene E to pyripyropene E which is oxidized to 11-deacetyl-pyripyropene O by pyr3, which is in turn acetylated into pyripyropene O by pyr8. Pyripyropene O is then oxidized to deacetyl-pyripyropene A by pyr9. Deacetyl-pyripyropene A is finally acetylated to pyripyropene A by pyr8. The protein is O-acetyltransferase pyr7 of Aspergillus fumigatus (strain ATCC MYA-4609 / CBS 101355 / FGSC A1100 / Af293) (Neosartorya fumigata).